The following is a 378-amino-acid chain: Succinyl-diaminopimelate desuccinylase (378 aa).

His-66 serves as a coordination point for Zn(2+). Asp-68 is an active-site residue. Residue Asp-99 participates in Zn(2+) binding. The active-site Proton acceptor is Glu-133. Residues Glu-134, Glu-162, and His-348 each coordinate Zn(2+).

The protein belongs to the peptidase M20A family. DapE subfamily. Homodimer. It depends on Zn(2+) as a cofactor. Co(2+) serves as cofactor.

The enzyme catalyses N-succinyl-(2S,6S)-2,6-diaminopimelate + H2O = (2S,6S)-2,6-diaminopimelate + succinate. It participates in amino-acid biosynthesis; L-lysine biosynthesis via DAP pathway; LL-2,6-diaminopimelate from (S)-tetrahydrodipicolinate (succinylase route): step 3/3. Functionally, catalyzes the hydrolysis of N-succinyl-L,L-diaminopimelic acid (SDAP), forming succinate and LL-2,6-diaminopimelate (DAP), an intermediate involved in the bacterial biosynthesis of lysine and meso-diaminopimelic acid, an essential component of bacterial cell walls. The protein is Succinyl-diaminopimelate desuccinylase of Halorhodospira halophila (strain DSM 244 / SL1) (Ectothiorhodospira halophila (strain DSM 244 / SL1)).